A 320-amino-acid chain; its full sequence is Methionyl-tRNA formyltransferase (320 aa).

111-114 (SLLP) is a binding site for (6S)-5,6,7,8-tetrahydrofolate.

The protein belongs to the Fmt family.

The catalysed reaction is L-methionyl-tRNA(fMet) + (6R)-10-formyltetrahydrofolate = N-formyl-L-methionyl-tRNA(fMet) + (6S)-5,6,7,8-tetrahydrofolate + H(+). Attaches a formyl group to the free amino group of methionyl-tRNA(fMet). The formyl group appears to play a dual role in the initiator identity of N-formylmethionyl-tRNA by promoting its recognition by IF2 and preventing the misappropriation of this tRNA by the elongation apparatus. This is Methionyl-tRNA formyltransferase from Methylacidiphilum infernorum (isolate V4) (Methylokorus infernorum (strain V4)).